The primary structure comprises 690 residues: Quinohemoprotein alcohol dehydrogenase ADH IIB (690 aa).

A signal peptide spans 1–22 (MKKPLRTSLLMLCLATPLAALA). Glu81 is a pyrroloquinoline quinone binding site. Cysteines 127 and 128 form a disulfide. Pyrroloquinoline quinone is bound by residues Arg133, Thr177, and 193 to 194 (GA). A Ca(2+)-binding site is contributed by Glu195. Thr252 is a binding site for pyrroloquinoline quinone. The Ca(2+) site is built by Asn272 and Asp317. The active-site Proton acceptor is the Asp317. Pyrroloquinoline quinone is bound by residues Lys344, 404–405 (NW), and Val547. In terms of domain architecture, Cytochrome c spans 600–678 (EQVQAGKQLY…QIKLYVMSRE (79 aa)). 4 residues coordinate heme c: Cys613, Cys616, His617, and Met655.

Belongs to the bacterial PQQ dehydrogenase family. In terms of assembly, monomer. Pyrroloquinoline quinone serves as cofactor. Ca(2+) is required as a cofactor. The cofactor is heme c.

It localises to the periplasm. It carries out the reaction 2 oxidized [azurin] + a primary alcohol = 2 reduced [azurin] + an aldehyde + 2 H(+). Its activity is regulated as follows. Inhibited by 10 mM 1-butanol. Its function is as follows. Catalyzes the dye-linked oxidation of primary alcohols to the corresponding aldehydes and the (subsequent) oxidation of the aldehydes to carboxylic acids. Exhibits activity with longer mono-alcohols (C-4 to C-7) but not with methanol or glycerol. Reacts with 1,2-propanediol and 1,3-propanediol but not with sugar alcohols such as D-sorbitol. In Pseudomonas putida (Arthrobacter siderocapsulatus), this protein is Quinohemoprotein alcohol dehydrogenase ADH IIB.